Here is a 228-residue protein sequence, read N- to C-terminus: 2,3-bisphosphoglycerate-dependent phosphoglycerate mutase (228 aa).

Substrate is bound by residues Arg7–Asn14, Thr20–Gly21, Arg59, Glu86–Tyr89, Lys97, Arg113–Arg114, and Gly182–Asn183. The Tele-phosphohistidine intermediate role is filled by His8. Catalysis depends on Glu86, which acts as the Proton donor/acceptor.

Belongs to the phosphoglycerate mutase family. BPG-dependent PGAM subfamily.

It carries out the reaction (2R)-2-phosphoglycerate = (2R)-3-phosphoglycerate. It functions in the pathway carbohydrate degradation; glycolysis; pyruvate from D-glyceraldehyde 3-phosphate: step 3/5. Functionally, catalyzes the interconversion of 2-phosphoglycerate and 3-phosphoglycerate. In Fusobacterium nucleatum subsp. nucleatum (strain ATCC 25586 / DSM 15643 / BCRC 10681 / CIP 101130 / JCM 8532 / KCTC 2640 / LMG 13131 / VPI 4355), this protein is 2,3-bisphosphoglycerate-dependent phosphoglycerate mutase.